We begin with the raw amino-acid sequence, 380 residues long: uncharacterized protein (380 aa).

9 consecutive transmembrane segments (helical) span residues 15-35 (LFHP…LAFP), 45-65 (LFKI…PFIF), 75-95 (ILYL…FKIT), 98-118 (LFLS…FVKF), 123-143 (IFVD…VLIY), 182-202 (IIAF…MLFI), 217-237 (MVLL…IILL), 303-323 (GTIY…LGVI), and 341-361 (LLLA…LSLL).

The protein localises to the cell membrane. This is an uncharacterized protein from Methanocaldococcus jannaschii (strain ATCC 43067 / DSM 2661 / JAL-1 / JCM 10045 / NBRC 100440) (Methanococcus jannaschii).